Consider the following 178-residue polypeptide: Histone deacetylase complex subunit SAP30L (178 aa).

Intrachain disulfides connect Cys-24–Cys-25 and Cys-33–Cys-69. The segment at 24-72 (CCLIEDAERCGRPAGNASFSKRIQKSISQRKLKLDIDKSVRHLYICDFH) adopts an Atypical zinc-finger fold. Positions 80–99 (RNKRKRKTSDDGGESPDHEV) are disordered. The Nuclear localization signal (NLS) signature appears at 81–86 (NKRKRK). Residues 83–85 (RKR) are important for DNA and phosphoinositide binding.

Belongs to the SAP30 family. Interacts with components of the histone deacetylase complex sin3a, hdac1 and hdac2. Binds histones and nucleosomes. Detected in embryos at 2dpf (at protein level). Widely expressed during embryogenesis and in adults.

It is found in the nucleus. It localises to the nucleolus. In terms of biological role, functions as a transcription repressor, probably via its interaction with histone deacetylase complexes. Required for normal expression of numerous target genes. Involved in the functional recruitment of the class 1 Sin3-histone deacetylase complex (HDAC) to the nucleolus. Binds DNA, apparently without sequence-specificity, and bends bound double-stranded DNA. Binds phosphoinositol phosphates (phosphoinositol 3-phosphate, phosphoinositol 4-phosphate and phosphoinositol 5-phosphate) via the same basic sequence motif that mediates DNA binding and nuclear import. In Danio rerio (Zebrafish), this protein is Histone deacetylase complex subunit SAP30L (sap30l).